The chain runs to 330 residues: Ferredoxin--NADP reductase (330 aa).

FAD is bound by residues Glu-35, Gln-43, Tyr-48, Val-90, Phe-123, Asp-285, and Thr-326.

Belongs to the ferredoxin--NADP reductase type 2 family. Homodimer. The cofactor is FAD.

It catalyses the reaction 2 reduced [2Fe-2S]-[ferredoxin] + NADP(+) + H(+) = 2 oxidized [2Fe-2S]-[ferredoxin] + NADPH. This Streptococcus pyogenes serotype M28 (strain MGAS6180) protein is Ferredoxin--NADP reductase.